Consider the following 449-residue polypeptide: Naphthalene 1,2-dioxygenase system, large oxygenase component (449 aa).

The region spanning 39–137 (WLFLTHDSLI…LNKKCLGLKE (99 aa)) is the Rieske domain. The [2Fe-2S] cluster site is built by Cys-81, His-83, Cys-101, and His-104. 3 residues coordinate Fe cation: His-208, His-213, and Asp-362.

It belongs to the bacterial ring-hydroxylating dioxygenase alpha subunit family. As to quaternary structure, the naphthalene dioxygenase (NDO) multicomponent enzyme system is composed of an electron transfer component and a dioxygenase component (iron sulfur protein (ISP)). The electron transfer component is composed of a ferredoxin reductase (NdoR) and a ferredoxin (NdoA), and the dioxygenase component is formed of a heterohexamer (trimer of heterodimers) of three large alpha subunits (NdoB) and three small beta subunits (NdoC). [2Fe-2S] cluster serves as cofactor. The cofactor is Fe(2+).

The catalysed reaction is naphthalene + NADH + O2 + H(+) = (1R,2S)-1,2-dihydronaphthalene-1,2-diol + NAD(+). Its pathway is aromatic compound metabolism; naphthalene degradation. Functionally, component of the naphthalene dioxygenase (NDO) multicomponent enzyme system which catalyzes the incorporation of both atoms of molecular oxygen into naphthalene to form cis-(1R,2S)-dihydroxy-1,2-dihydronaphthalene. The alpha subunit has a catalytic role in the holoenzyme. This Pseudomonas fluorescens protein is Naphthalene 1,2-dioxygenase system, large oxygenase component.